Consider the following 294-residue polypeptide: Acetyl-coenzyme A carboxylase carboxyl transferase subunit beta (294 aa).

One can recognise a CoA carboxyltransferase N-terminal domain in the interval 30–294; it reads IMTKCPECKK…PEVGGEADGE (265 aa). Zn(2+) contacts are provided by cysteine 34, cysteine 37, cysteine 53, and cysteine 56. The segment at 34–56 adopts a C4-type zinc-finger fold; sequence CPECKKIMYTKELQKNLMVCNYC.

The protein belongs to the AccD/PCCB family. As to quaternary structure, acetyl-CoA carboxylase is a heterohexamer composed of biotin carboxyl carrier protein (AccB), biotin carboxylase (AccC) and two subunits each of ACCase subunit alpha (AccA) and ACCase subunit beta (AccD). Zn(2+) is required as a cofactor.

The protein localises to the cytoplasm. The enzyme catalyses N(6)-carboxybiotinyl-L-lysyl-[protein] + acetyl-CoA = N(6)-biotinyl-L-lysyl-[protein] + malonyl-CoA. Its pathway is lipid metabolism; malonyl-CoA biosynthesis; malonyl-CoA from acetyl-CoA: step 1/1. Functionally, component of the acetyl coenzyme A carboxylase (ACC) complex. Biotin carboxylase (BC) catalyzes the carboxylation of biotin on its carrier protein (BCCP) and then the CO(2) group is transferred by the transcarboxylase to acetyl-CoA to form malonyl-CoA. In Listeria monocytogenes serotype 4a (strain HCC23), this protein is Acetyl-coenzyme A carboxylase carboxyl transferase subunit beta.